We begin with the raw amino-acid sequence, 290 residues long: Probable branched-chain-amino-acid aminotransferase (290 aa).

K155 carries the N6-(pyridoxal phosphate)lysine modification.

This sequence belongs to the class-IV pyridoxal-phosphate-dependent aminotransferase family. Pyridoxal 5'-phosphate serves as cofactor.

It catalyses the reaction L-leucine + 2-oxoglutarate = 4-methyl-2-oxopentanoate + L-glutamate. The enzyme catalyses L-isoleucine + 2-oxoglutarate = (S)-3-methyl-2-oxopentanoate + L-glutamate. The catalysed reaction is L-valine + 2-oxoglutarate = 3-methyl-2-oxobutanoate + L-glutamate. Its pathway is amino-acid biosynthesis; L-isoleucine biosynthesis; L-isoleucine from 2-oxobutanoate: step 4/4. It participates in amino-acid biosynthesis; L-leucine biosynthesis; L-leucine from 3-methyl-2-oxobutanoate: step 4/4. The protein operates within amino-acid biosynthesis; L-valine biosynthesis; L-valine from pyruvate: step 4/4. Acts on leucine, isoleucine and valine. The polypeptide is Probable branched-chain-amino-acid aminotransferase (ilvE) (Rickettsia felis (strain ATCC VR-1525 / URRWXCal2) (Rickettsia azadi)).